Reading from the N-terminus, the 117-residue chain is Ribonuclease P protein component (117 aa).

It belongs to the RnpA family. In terms of assembly, consists of a catalytic RNA component (M1 or rnpB) and a protein subunit.

It carries out the reaction Endonucleolytic cleavage of RNA, removing 5'-extranucleotides from tRNA precursor.. Functionally, RNaseP catalyzes the removal of the 5'-leader sequence from pre-tRNA to produce the mature 5'-terminus. It can also cleave other RNA substrates such as 4.5S RNA. The protein component plays an auxiliary but essential role in vivo by binding to the 5'-leader sequence and broadening the substrate specificity of the ribozyme. The polypeptide is Ribonuclease P protein component (Nocardioides sp. (strain ATCC BAA-499 / JS614)).